The chain runs to 165 residues: Cytochrome b6-f complex subunit 4 (165 aa).

A run of 3 helical transmembrane segments spans residues Leu36–Val56, Leu95–Glu115, and Thr131–Ile151.

This sequence belongs to the cytochrome b family. PetD subfamily. In terms of assembly, the 4 large subunits of the cytochrome b6-f complex are cytochrome b6, subunit IV (17 kDa polypeptide, petD), cytochrome f and the Rieske protein, while the 4 small subunits are petG, petL, petM and petN. The complex functions as a dimer.

The protein resides in the plastid. Its subcellular location is the chloroplast thylakoid membrane. Component of the cytochrome b6-f complex, which mediates electron transfer between photosystem II (PSII) and photosystem I (PSI), cyclic electron flow around PSI, and state transitions. This Populus alba (White poplar) protein is Cytochrome b6-f complex subunit 4.